A 93-amino-acid chain; its full sequence is Small ribosomal subunit protein bS20 (93 aa).

The tract at residues 72 to 93 (KNTASRKKSRLTRKFNSVYKAS) is disordered. Residues 74-84 (TASRKKSRLTR) are compositionally biased toward basic residues.

This sequence belongs to the bacterial ribosomal protein bS20 family.

Functionally, binds directly to 16S ribosomal RNA. This is Small ribosomal subunit protein bS20 from Carboxydothermus hydrogenoformans (strain ATCC BAA-161 / DSM 6008 / Z-2901).